Reading from the N-terminus, the 298-residue chain is MRRYHKMEKIGEGTYGVVYKAQNNHGEICALKKIRVEEEDEGIPSTAIREISLLKELHHPNIVWLRDVIHSEKCLTLVFEYLDQDLKKLLDACDGGLEPTTAKSFLYQILRGISYCHDHRILHRDLKPQNLLINREGVLKLADFGLARAFAIPVRSYTHEVVTLWYRAPDVLMGSKKYSTAVDIWSVGCIFAEMINGVPLFPGISEQDQLKRIFKILGTPNVDSWPQVVNLPAYNPDFCYYEKQAWSSIVPKLNESGIDLISRMLQLDPVQRISAKEALKHDYFKDLHRPSEFLNGVH.

Positions Tyr4–Phe284 constitute a Protein kinase domain. ATP-binding positions include Ile10–Val18 and Lys32. At Thr14 the chain carries Phosphothreonine. Phosphotyrosine is present on Tyr15. Asp125 (proton acceptor) is an active-site residue. Thr158 bears the Phosphothreonine mark.

Belongs to the protein kinase superfamily. CMGC Ser/Thr protein kinase family. CDC2/CDKX subfamily. As to quaternary structure, may form a complex composed of at least the catalytic subunit CRK2 and a cyclin. The cofactor is Mg(2+).

It localises to the cytoplasm. The catalysed reaction is L-seryl-[protein] + ATP = O-phospho-L-seryl-[protein] + ADP + H(+). It catalyses the reaction L-threonyl-[protein] + ATP = O-phospho-L-threonyl-[protein] + ADP + H(+). It carries out the reaction [DNA-directed RNA polymerase] + ATP = phospho-[DNA-directed RNA polymerase] + ADP + H(+). Its activity is regulated as follows. Phosphorylation at Thr-14 or Tyr-15 inactivates the enzyme, while phosphorylation at Thr-158 activates it. Its function is as follows. Serine/threonine-protein kinase. Involved in the control of the cell cycle. Required for entry into S-phase and mitosis. Probable component of the kinase complex that phosphorylates the repetitive C-terminus of RNA polymerase II. The sequence is that of Cyclin-dependent kinase 2 homolog from Theileria annulata.